A 254-amino-acid polypeptide reads, in one-letter code: Triosephosphate isomerase (254 aa).

10–12 (NWK) contacts substrate. The active-site Electrophile is His99. Residue Glu169 is the Proton acceptor of the active site. Residues Gly175, Ser215, and 236–237 (GG) each bind substrate.

Belongs to the triosephosphate isomerase family. In terms of assembly, homodimer.

The protein resides in the cytoplasm. It catalyses the reaction D-glyceraldehyde 3-phosphate = dihydroxyacetone phosphate. The protein operates within carbohydrate biosynthesis; gluconeogenesis. It functions in the pathway carbohydrate degradation; glycolysis; D-glyceraldehyde 3-phosphate from glycerone phosphate: step 1/1. In terms of biological role, involved in the gluconeogenesis. Catalyzes stereospecifically the conversion of dihydroxyacetone phosphate (DHAP) to D-glyceraldehyde-3-phosphate (G3P). This Chlamydia abortus (strain DSM 27085 / S26/3) (Chlamydophila abortus) protein is Triosephosphate isomerase.